The primary structure comprises 301 residues: MAKPLSITSSLPTFSVTWRAYFEMTKPKVVALMLLTVLVGMCLAVPHAVPVQPLLAGMLGIAMMAGSAAALNHLIDRRIDGLMARTYNRPLPKGRISATRALIFAASLGSLGFIVLYSLVNPLTAWLTFASLIGYALVYTAYLKRATSQNIVIGGLAGAMPPLLGWTAVTNEFHGHALLLVIIIFTWTPPHFWALAIHRRAEYAKVDIPMLPVTHGVEFTKTCILLYTVLLAIACLLPVLVGMCGPVYFVCSSLLSTGFIYKAWQLKYRDHDGSAMQVFRFSIYHLMLLFMALLLDHYLWN.

The next 9 helical transmembrane spans lie at 29–49, 51–71, 101–121, 123–143, 150–170, 177–197, 223–243, 244–264, and 275–295; these read VVALMLLTVLVGMCLAVPHAV, VQPLLAGMLGIAMMAGSAAAL, ALIFAASLGSLGFIVLYSLVN, LTAWLTFASLIGYALVYTAYL, NIVIGGLAGAMPPLLGWTAVT, ALLLVIIIFTWTPPHFWALAI, CILLYTVLLAIACLLPVLVGM, CGPVYFVCSSLLSTGFIYKAW, and AMQVFRFSIYHLMLLFMALLL.

Belongs to the UbiA prenyltransferase family. Protoheme IX farnesyltransferase subfamily.

It localises to the cell inner membrane. The catalysed reaction is heme b + (2E,6E)-farnesyl diphosphate + H2O = Fe(II)-heme o + diphosphate. Its pathway is porphyrin-containing compound metabolism; heme O biosynthesis; heme O from protoheme: step 1/1. Functionally, converts heme B (protoheme IX) to heme O by substitution of the vinyl group on carbon 2 of heme B porphyrin ring with a hydroxyethyl farnesyl side group. The protein is Protoheme IX farnesyltransferase 1 of Shewanella baltica (strain OS185).